The following is a 196-amino-acid chain: Blue copper protein (196 aa).

The first 22 residues, 1 to 22 (MAGVFKTVTFLVLVFAAVVVFA), serve as a signal peptide directing secretion. In terms of domain architecture, Phytocyanin spans 23–125 (EDYDVGDDTE…GQKLSITVVA (103 aa)). A Cu cation-binding site is contributed by histidine 66. A disulfide bridge links cysteine 79 with cysteine 113. N-linked (GlcNAc...) asparagine glycosylation is present at asparagine 98. Cu cation-binding residues include cysteine 107, histidine 112, and glutamine 117. The segment at 133 to 173 (TPGAGATPAPGSTPSTGGTTPPTAGGTTTPSGSSGTTTPAG) is disordered. Positions 135-173 (GAGATPAPGSTPSTGGTTPPTAGGTTTPSGSSGTTTPAG) are enriched in low complexity. The GPI-anchor amidated asparagine moiety is linked to residue asparagine 174. Positions 175–196 (AASSLGGATFLVAFVSAVVALF) are cleaved as a propeptide — removed in mature form.

The protein localises to the cell membrane. Its function is as follows. Probably acts as an electron carrier. The sequence is that of Blue copper protein (BCB) from Arabidopsis thaliana (Mouse-ear cress).